A 465-amino-acid chain; its full sequence is MYKRDTIAAIATCPNGGGVSILRLSGSKSIDVVKTVSLVSSNQCWHSHCILYGWIKDNEDQSFVDEVLILLMMAPRSYTAENVVEIHCHASIVLANEILRILVKQGVRLAKPGEFTMRAFLNGRIGLSQVESVLKVIHSKTIASAKLAANTLRRGGSERIRRLKHTLSLLLADLEFHIDFSDEFIDVDSIEDELRSTIQSSLLDIKDLISSYNKVSKLNEGTKVCIIGKPNVGKSSLLNAIAKRECSIVTNFPGTTRDIVSFETMLGNTLVRLYDTAGIRQSVDEIEKIGISKTELFVDECQIVFFVLDAIQGLSSEDSVIFNKLNLMNKNFVILINKIDKKVQRKIDEIYETLKCSNRRIIEVSAIKNIGLEKLNNCILDLSSKEDFDLPVHFSVNCKYLEILNNIYLILDELYTGSLNKSVTSYDFIAVELRRVLQGLNQITGDEVVENNVLDAIFSKFCVGK.

(6S)-5-formyl-5,6,7,8-tetrahydrofolate-binding residues include arginine 23, glutamate 85, and arginine 124. Residues glycine 221 to serine 384 form the TrmE-type G domain. GTP contacts are provided by residues asparagine 231–serine 236, threonine 250–threonine 256, and aspartate 275–glycine 278. Residues serine 235 and threonine 256 each coordinate Mg(2+). Lysine 465 lines the (6S)-5-formyl-5,6,7,8-tetrahydrofolate pocket.

It belongs to the TRAFAC class TrmE-Era-EngA-EngB-Septin-like GTPase superfamily. TrmE GTPase family. The cofactor is K(+).

The protein localises to the plastid. It is found in the chloroplast. Its function is as follows. Exhibits a very high intrinsic GTPase hydrolysis rate. Involved in the addition of a carboxymethylaminomethyl (cmnm) group at the wobble position (U34) of certain tRNAs, forming tRNA-cmnm(5)s(2)U34. The sequence is that of Probable tRNA modification GTPase MnmE from Cyanidium caldarium (Red alga).